The following is a 373-amino-acid chain: Probable tRNA sulfurtransferase (373 aa).

A THUMP domain is found at 54–158 (NKNIEELSKV…NDVAYFYYKI (105 aa)). ATP contacts are provided by residues 176-177 (LF), 201-202 (NF), K256, G278, and Q287.

Belongs to the ThiI family.

Its subcellular location is the cytoplasm. It carries out the reaction [ThiI sulfur-carrier protein]-S-sulfanyl-L-cysteine + a uridine in tRNA + 2 reduced [2Fe-2S]-[ferredoxin] + ATP + H(+) = [ThiI sulfur-carrier protein]-L-cysteine + a 4-thiouridine in tRNA + 2 oxidized [2Fe-2S]-[ferredoxin] + AMP + diphosphate. The enzyme catalyses [ThiS sulfur-carrier protein]-C-terminal Gly-Gly-AMP + S-sulfanyl-L-cysteinyl-[cysteine desulfurase] + AH2 = [ThiS sulfur-carrier protein]-C-terminal-Gly-aminoethanethioate + L-cysteinyl-[cysteine desulfurase] + A + AMP + 2 H(+). It participates in cofactor biosynthesis; thiamine diphosphate biosynthesis. Its function is as follows. Catalyzes the ATP-dependent transfer of a sulfur to tRNA to produce 4-thiouridine in position 8 of tRNAs, which functions as a near-UV photosensor. Also catalyzes the transfer of sulfur to the sulfur carrier protein ThiS, forming ThiS-thiocarboxylate. This is a step in the synthesis of thiazole, in the thiamine biosynthesis pathway. The sulfur is donated as persulfide by IscS. This chain is Probable tRNA sulfurtransferase, found in Saccharolobus islandicus (strain Y.N.15.51 / Yellowstone #2) (Sulfolobus islandicus).